The chain runs to 462 residues: Proline--tRNA ligase (462 aa).

Belongs to the class-II aminoacyl-tRNA synthetase family. ProS type 3 subfamily. As to quaternary structure, homodimer.

It localises to the cytoplasm. The enzyme catalyses tRNA(Pro) + L-proline + ATP = L-prolyl-tRNA(Pro) + AMP + diphosphate. In terms of biological role, catalyzes the attachment of proline to tRNA(Pro) in a two-step reaction: proline is first activated by ATP to form Pro-AMP and then transferred to the acceptor end of tRNA(Pro). The polypeptide is Proline--tRNA ligase (Thermoplasma volcanium (strain ATCC 51530 / DSM 4299 / JCM 9571 / NBRC 15438 / GSS1)).